The primary structure comprises 523 residues: 2-isopropylmalate synthase (523 aa).

One can recognise a Pyruvate carboxyltransferase domain in the interval 5-267 (VIIFDTTLRD…HTAINHQEIW (263 aa)). 4 residues coordinate Mn(2+): D14, H202, H204, and N238. The regulatory domain stretch occupies residues 392–523 (RLDYFSVQSG…QHNENNKETV (132 aa)).

This sequence belongs to the alpha-IPM synthase/homocitrate synthase family. LeuA type 1 subfamily. As to quaternary structure, homodimer. The cofactor is Mn(2+).

It localises to the cytoplasm. It catalyses the reaction 3-methyl-2-oxobutanoate + acetyl-CoA + H2O = (2S)-2-isopropylmalate + CoA + H(+). It participates in amino-acid biosynthesis; L-leucine biosynthesis; L-leucine from 3-methyl-2-oxobutanoate: step 1/4. Catalyzes the condensation of the acetyl group of acetyl-CoA with 3-methyl-2-oxobutanoate (2-ketoisovalerate) to form 3-carboxy-3-hydroxy-4-methylpentanoate (2-isopropylmalate). This is 2-isopropylmalate synthase from Escherichia coli O81 (strain ED1a).